We begin with the raw amino-acid sequence, 350 residues long: Phosphotriesterase-related protein (350 aa).

A divalent metal cation is bound by residues His-22, His-24, Glu-169, His-201, His-230, and Asp-298.

Belongs to the metallo-dependent hydrolases superfamily. Phosphotriesterase family. The cofactor is a divalent metal cation.

The protein is Phosphotriesterase-related protein of Drosophila persimilis (Fruit fly).